Reading from the N-terminus, the 257-residue chain is Large ribosomal subunit protein uL2 (257 aa).

Residues 207 to 230 (VEHPFGGGNHQHIGKPSTIRRDAP) form a disordered region.

It belongs to the universal ribosomal protein uL2 family. As to quaternary structure, component of the large ribosomal subunit.

It is found in the cytoplasm. Functionally, component of the large ribosomal subunit. The ribosome is a large ribonucleoprotein complex responsible for the synthesis of proteins in the cell. The chain is Large ribosomal subunit protein uL2 (rpl8) from Danio rerio (Zebrafish).